The primary structure comprises 314 residues: Putative peptide transport system permease protein BruAb2_1031 (314 aa).

The next 6 helical transmembrane spans lie at 12 to 32 (AIPV…LLPG), 101 to 121 (LALL…VVAA), 135 to 155 (LALL…VILF), 177 to 197 (WLRS…GYLA), 237 to 257 (VSVL…SVVI), and 286 to 306 (MLFL…LYTI). One can recognise an ABC transmembrane type-1 domain in the interval 95–304 (LPVTISLALL…AINVLVDILY (210 aa)).

It belongs to the binding-protein-dependent transport system permease family. In terms of assembly, the complex is composed of two ATP-binding proteins (BruAb2_1033 and BruAb2_1034), two transmembrane proteins (BruAb2_1031 and BruAb2_1032) and a solute-binding protein (BruAb2_1030).

It localises to the cell inner membrane. Its function is as follows. Probably part of an ABC transporter complex that could be involved in peptide import. Probably responsible for the translocation of the substrate across the membrane. The polypeptide is Putative peptide transport system permease protein BruAb2_1031 (Brucella abortus biovar 1 (strain 9-941)).